The primary structure comprises 456 residues: 26S proteasome non-ATPase regulatory subunit 12 (456 aa).

The residue at position 2 (A2) is an N-acetylalanine. Residue K92 forms a Glycyl lysine isopeptide (Lys-Gly) (interchain with G-Cter in SUMO1); alternate linkage. A Glycyl lysine isopeptide (Lys-Gly) (interchain with G-Cter in SUMO2); alternate cross-link involves residue K92. A PCI domain is found at 242–420; sequence SICKHYRAIY…GVINFQRPKD (179 aa). K368 bears the N6-acetyllysine mark.

It belongs to the proteasome subunit p55 family. Component of the 19S proteasome regulatory particle complex. The 26S proteasome consists of a 20S core particle (CP) and two 19S regulatory subunits (RP). The regulatory particle is made of a lid composed of 9 subunits including PSMD12, a base containing 6 ATPases and few additional components. Interacts with ERCC6.

In terms of biological role, component of the 26S proteasome, a multiprotein complex involved in the ATP-dependent degradation of ubiquitinated proteins. This complex plays a key role in the maintenance of protein homeostasis by removing misfolded or damaged proteins, which could impair cellular functions, and by removing proteins whose functions are no longer required. Therefore, the proteasome participates in numerous cellular processes, including cell cycle progression, apoptosis, or DNA damage repair. In Mus musculus (Mouse), this protein is 26S proteasome non-ATPase regulatory subunit 12 (Psmd12).